Consider the following 923-residue polypeptide: DNA mismatch repair protein PMS1 (923 aa).

Basic and acidic residues-rich tracts occupy residues 543–553 (DMTPSERDSEL), 565–581 (NVER…RFEE), and 591–601 (GDVERVSEDNP). The tract at residues 543 to 603 (DMTPSERDSE…ERVSEDNPRC (61 aa)) is disordered.

Belongs to the DNA mismatch repair MutL/HexB family. In terms of assembly, heterodimer of MLH1 and PMS1, called MutLalpha, which is the major MMR MutL activity correcting base-base mismatches as well as IDLs. The heterodimer binds double strand DNA independently of a mismatch with positive cooperativity and has more than one DNA binding site. Forms a ternary complex with either the MSH2-MSH6 (MutSalpha) or the MSH2-MSH3 heterodimer (MutSbeta), which recognize and bind to mismatch DNA. Ternary complex formation is promoted by ATP binding. Expressed at very low levels in mature leaves. Detected in rapidly dividing tissues.

The protein localises to the nucleus. Functionally, required for DNA mismatch repair (MMR), correcting base-base mismatches and insertion-deletion loops (IDLs) resulting from DNA replication, DNA damage or from recombination events between non-identical sequences during meiosis. Component of the MutLalpha heterodimer that forms a ternary complex with the MutS heterodimers, which initially recognize the DNA mismatches. This complex is thought to be responsible for directing the downstream MMR events, including strand discrimination, excision, and resynthesis. Plays a major role in maintaining the genetic stability of simple sequence repeats and in the repair of heteroduplex sites present in meiotic recombination intermediates. Does not seem to be required for homologous somatic recombination. This Arabidopsis thaliana (Mouse-ear cress) protein is DNA mismatch repair protein PMS1 (PMS1).